The primary structure comprises 166 residues: Peptidoglycan-associated lipoprotein (166 aa).

A signal peptide spans 1–21; sequence MEMLKFGKFAALALAMAVAVG. Cys-22 carries N-palmitoyl cysteine lipidation. Cys-22 carries S-diacylglycerol cysteine lipidation. Residues 54–166 form the OmpA-like domain; sequence SEEAALRAIT…AQNRRVELRK (113 aa). Residues 147 to 166 are disordered; it reads VATGNDEQSWAQNRRVELRK.

Belongs to the Pal lipoprotein family. As to quaternary structure, the Tol-Pal system is composed of five core proteins: the inner membrane proteins TolA, TolQ and TolR, the periplasmic protein TolB and the outer membrane protein Pal. They form a network linking the inner and outer membranes and the peptidoglycan layer.

The protein resides in the cell outer membrane. Functionally, part of the Tol-Pal system, which plays a role in outer membrane invagination during cell division and is important for maintaining outer membrane integrity. The sequence is that of Peptidoglycan-associated lipoprotein from Pseudomonas putida (Arthrobacter siderocapsulatus).